A 305-amino-acid polypeptide reads, in one-letter code: tRNA uridine(34) hydroxylase (305 aa).

In terms of domain architecture, Rhodanese spans 125-219 (ADENTVVVDT…YLEEVPREQS (95 aa)). Catalysis depends on Cys-179, which acts as the Cysteine persulfide intermediate.

The protein belongs to the TrhO family.

It carries out the reaction uridine(34) in tRNA + AH2 + O2 = 5-hydroxyuridine(34) in tRNA + A + H2O. In terms of biological role, catalyzes oxygen-dependent 5-hydroxyuridine (ho5U) modification at position 34 in tRNAs. In Brucella ovis (strain ATCC 25840 / 63/290 / NCTC 10512), this protein is tRNA uridine(34) hydroxylase.